A 269-amino-acid polypeptide reads, in one-letter code: MSSFQQENQLNANNNNNNVMNEYISYSVPLSPVTTNENPQDYWMNGLIANSVPISQTTSNSDINYSQPPNPINFNSIFEGVNIFSNDDFTSSSNDISLANSPETNATSDSIAQNLDEVKVKLENHNQARLDALEFAFETKSILKEQPKIKQEPGTKAATKPKRRAPRKKLTESQKKAHNKIEKRYRININAKIAGIQKIIPWVAFEKTAFETGEENETEAEAKNNTRLNKSMILEKATEYILHLQKKEEEYMAENQKLREQVIKLGGEI.

A disordered region spans residues 146-178 (QPKIKQEPGTKAATKPKRRAPRKKLTESQKKAH). Residues 159–168 (TKPKRRAPRK) show a composition bias toward basic residues. Over residues 169-178 (KLTESQKKAH) the composition is skewed to basic and acidic residues. The region spanning 173–244 (SQKKAHNKIE…EKATEYILHL (72 aa)) is the bHLH domain.

In terms of assembly, efficient DNA binding requires dimerization with another bHLH protein.

The protein localises to the nucleus. In terms of biological role, key transcriptional regulator of carbohydrate metabolism. Binds the promoter sequences of the glycolytic genes at the CANNTG motif and activates their expression during growth on either fermentable or non-fermentable carbon sources as well as under hypoxic growth conditions. Complete glycolytic activation by GAL4 and TYE7 is required for full virulence. Involved in biofilm formation and negatively regulates hyphal formation under hypoxia. Also controls the expression of the copper transport protein CTR1. This chain is Carbohydrate metabolism regulator TYE7 (TYE7), found in Candida albicans (strain SC5314 / ATCC MYA-2876) (Yeast).